Consider the following 146-residue polypeptide: UPF0742 protein C1348.03 (146 aa).

The chain crosses the membrane as a helical span at residues Leu-38–Ser-60.

It belongs to the UPF0742 family.

It is found in the cytoplasm. The protein resides in the nucleus membrane. The protein is UPF0742 protein C1348.03 of Schizosaccharomyces pombe (strain 972 / ATCC 24843) (Fission yeast).